Consider the following 331-residue polypeptide: Low affinity immunoglobulin epsilon Fc receptor (331 aa).

Residues 1–23 (MEENEYSGYWEPPRKRCCCARRG) are Cytoplasmic-facing. S-palmitoyl cysteine attachment occurs at residues C17 and C18. The helical; Signal-anchor for type II membrane protein transmembrane segment at 24-49 (TQLMLVGLLSTAMWAGLLALLLLWHW) threads the bilayer. Topologically, residues 50–331 (ETEKNLKQLG…PTRPTPKSEP (282 aa)) are extracellular. N-linked (GlcNAc...) asparagine glycosylation is present at N65. Repeats lie at residues 71 to 91 (KDLQKFQSNQLAQKSQVVQMS), 92 to 112 (QNLQELQAEQKQMKAQDSRLS), and 113 to 133 (QNLTGLQEDLRNAQSQNSKLS). N-linked (GlcNAc...) asparagine glycosylation occurs at N114. Disulfide bonds link C183–C311, C186–C197, C214–C305, and C282–C296. The 114-residue stretch at 185–298 (ICPKNWLHFQ…GQWNDAFCRS (114 aa)) folds into the C-type lectin domain. Residues E272, N292, and D293 each coordinate Ca(2+). A glycan (O-linked (Xyl...) (chondroitin sulfate) serine) is linked at S319.

As to quaternary structure, homotrimer. Interacts (via C-type lectin domain) with IGHE (via CH3 region); this interaction regulates IgE homeostasis. Interacts (via C-terminus) with CR2/CD21 (via Sushi domain 1 and 2). Post-translationally, N- and O-glycosylated.

The protein resides in the cell membrane. The protein localises to the secreted. Its function is as follows. Low-affinity receptor for immunoglobulin E (IgE) and CR2/CD21. Has essential roles in the regulation of IgE production and in the differentiation of B cells. On B cells, initiates IgE-dependent antigen uptake and presentation to T cells. On macrophages, upon IgE binding and antigen cross-linking induces intracellular killing of parasites through activation of L-Arginine-nitric oxide pathway. The polypeptide is Low affinity immunoglobulin epsilon Fc receptor (Fcer2) (Mus musculus (Mouse)).